The chain runs to 312 residues: R2-like ligand binding oxidase (312 aa).

Glutamate 68, glutamate 101, and histidine 104 together coordinate Mn(2+). Residues 71-162 constitute a cross-link (3-(O4'-tyrosyl)-valine (Val-Tyr)); that stretch reads VTQDIQPFMA…AAQVRASVTY (92 aa). Residue glutamate 101 participates in Fe cation binding. The Fe cation site is built by glutamate 167, glutamate 202, and histidine 205.

Belongs to the ribonucleoside diphosphate reductase small chain family. R2-like ligand binding oxidase subfamily. In terms of assembly, homodimer. Fe cation is required as a cofactor. Mn(2+) serves as cofactor.

Functionally, probable oxidase that might be involved in lipid metabolism. This is R2-like ligand binding oxidase from Mycolicibacterium vanbaalenii (strain DSM 7251 / JCM 13017 / BCRC 16820 / KCTC 9966 / NRRL B-24157 / PYR-1) (Mycobacterium vanbaalenii).